A 539-amino-acid polypeptide reads, in one-letter code: MDNKRVILAVALSFAVLLGWQFLFPPQPQQPAPAQQEQTAQPNQAVDSSVAGPVSNQLPDPASTSAIVSAKGTRLTVETPLYSAVINSQGGLLESFKLKKFKATIDADSPDVDMVGTNALDKAPMGLILNGIATWANGVWGYEGANLNLEGDKLGTLIFRGDVEGFRIERRLTFHADNYLIDEDVRVINKSNPSGMGRIAFTTATKSLTAADDRYNPTRIAWFNAEGLVEESDRDTLSETGVTESGKVEWAAIDSNYFILALVPGADSVTMKGKLQDDIFRIAAEQNVSFDKDIERKLACSYYFGPMDAQLMAKVPGELSKAIDFGWFDIIAKPLVVALEWFHQYTNNYGIAIILLTIVIKILFWPLSHKSYKSMEQMKRLQPMMAKLREKHGDDREALNKEMMQLYKTYNVNPAGGCLPMLLQIPVFFGLYKALMGTVALRHADFVHFLPFTDIVWLADLSAKDPLYITPIVMGATMFLQQKMTPSAGDPTQQKIMMFLPLVFTFMFLNFPSGLVVYWMVNNVLSIAQQWMMMRNVKN.

Residues 6-26 form a helical membrane-spanning segment; the sequence is VILAVALSFAVLLGWQFLFPP. The segment at 28–63 is disordered; it reads PQQPAPAQQEQTAQPNQAVDSSVAGPVSNQLPDPAS. The span at 32 to 45 shows a compositional bias: low complexity; it reads APAQQEQTAQPNQA. Polar residues predominate over residues 54–63; sequence VSNQLPDPAS. 3 helical membrane passes run 349–369, 421–441, and 496–516; these read YGIAIILLTIVIKILFWPLSH, MLLQIPVFFGLYKALMGTVAL, and IMMFLPLVFTFMFLNFPSGLV.

The protein belongs to the OXA1/ALB3/YidC family. Type 1 subfamily. In terms of assembly, interacts with the Sec translocase complex via SecD. Specifically interacts with transmembrane segments of nascent integral membrane proteins during membrane integration.

It localises to the cell inner membrane. Functionally, required for the insertion and/or proper folding and/or complex formation of integral membrane proteins into the membrane. Involved in integration of membrane proteins that insert both dependently and independently of the Sec translocase complex, as well as at least some lipoproteins. Aids folding of multispanning membrane proteins. The protein is Membrane protein insertase YidC of Maridesulfovibrio salexigens (strain ATCC 14822 / DSM 2638 / NCIMB 8403 / VKM B-1763) (Desulfovibrio salexigens).